The chain runs to 666 residues: uncharacterized protein (666 aa).

It belongs to the MG032/MG096/MG288 family.

This is an uncharacterized protein from Mycoplasma pneumoniae (strain ATCC 29342 / M129 / Subtype 1) (Mycoplasmoides pneumoniae).